The sequence spans 243 residues: ATP synthase subunit a, chloroplastic (243 aa).

The next 5 membrane-spanning stretches (helical) occupy residues 32-52 (AQVL…ALIA), 91-111 (IPFV…GALI), 130-150 (INTT…AGLN), 195-215 (LVVA…MMFL), and 216-236 (GLFT…AYIG).

It belongs to the ATPase A chain family. As to quaternary structure, F-type ATPases have 2 components, CF(1) - the catalytic core - and CF(0) - the membrane proton channel. CF(1) has five subunits: alpha(3), beta(3), gamma(1), delta(1), epsilon(1). CF(0) has four main subunits: a, b, b' and c.

Its subcellular location is the plastid. The protein localises to the chloroplast thylakoid membrane. In terms of biological role, key component of the proton channel; it plays a direct role in the translocation of protons across the membrane. The protein is ATP synthase subunit a, chloroplastic of Chaetosphaeridium globosum (Charophycean green alga).